The following is a 167-amino-acid chain: Interferon gamma (167 aa).

Positions 1–23 are cleaved as a signal peptide; that stretch reads MNYTSFIFAFQLCIILCSSGYYC. The residue at position 24 (Gln-24) is a Pyrrolidone carboxylic acid. Asn-39 and Asn-107 each carry an N-linked (GlcNAc...) asparagine glycan.

This sequence belongs to the type II (or gamma) interferon family. In terms of assembly, homodimer. Interacts with IFNGR1 (via extracellular domain); this interaction promotes IFNGR1 dimerization. Released primarily from activated T lymphocytes.

The protein resides in the secreted. In terms of biological role, type II interferon produced by immune cells such as T-cells and NK cells that plays crucial roles in antimicrobial, antiviral, and antitumor responses by activating effector immune cells and enhancing antigen presentation. Primarily signals through the JAK-STAT pathway after interaction with its receptor IFNGR1 to affect gene regulation. Upon IFNG binding, IFNGR1 intracellular domain opens out to allow association of downstream signaling components JAK2, JAK1 and STAT1, leading to STAT1 activation, nuclear translocation and transcription of IFNG-regulated genes. Many of the induced genes are transcription factors such as IRF1 that are able to further drive regulation of a next wave of transcription. Plays a role in class I antigen presentation pathway by inducing a replacement of catalytic proteasome subunits with immunoproteasome subunits. In turn, increases the quantity, quality, and repertoire of peptides for class I MHC loading. Increases the efficiency of peptide generation also by inducing the expression of activator PA28 that associates with the proteasome and alters its proteolytic cleavage preference. Up-regulates as well MHC II complexes on the cell surface by promoting expression of several key molecules such as cathepsins B/CTSB, H/CTSH, and L/CTSL. Participates in the regulation of hematopoietic stem cells during development and under homeostatic conditions by affecting their development, quiescence, and differentiation. This is Interferon gamma (IFNG) from Felis catus (Cat).